A 126-amino-acid polypeptide reads, in one-letter code: MDKTLKFTESHEWVRDNGDGTVTIGISEHAQEMLGDVVFVELPEIDAEIDAGDSFSLVESVKAASDIYAPVTGVVIEVNEDLQNSPELINEEPYDGGWIVKVKMSDPDELKDLKDAEEYLASIEED.

The Lipoyl-binding domain occupies 21 to 103 (TVTIGISEHA…YDGGWIVKVK (83 aa)). An N6-lipoyllysine modification is found at Lys62.

Belongs to the GcvH family. In terms of assembly, the glycine cleavage system is composed of four proteins: P, T, L and H. The cofactor is (R)-lipoate.

The glycine cleavage system catalyzes the degradation of glycine. The H protein shuttles the methylamine group of glycine from the P protein to the T protein. The chain is Glycine cleavage system H protein from Vibrio cholerae serotype O1 (strain ATCC 39541 / Classical Ogawa 395 / O395).